A 103-amino-acid polypeptide reads, in one-letter code: Large ribosomal subunit protein bL21 (103 aa).

This sequence belongs to the bacterial ribosomal protein bL21 family. In terms of assembly, part of the 50S ribosomal subunit. Contacts protein L20.

Functionally, this protein binds to 23S rRNA in the presence of protein L20. In Mycobacterium marinum (strain ATCC BAA-535 / M), this protein is Large ribosomal subunit protein bL21.